We begin with the raw amino-acid sequence, 428 residues long: 3-phosphoshikimate 1-carboxyvinyltransferase (428 aa).

Residues Lys-21, Ser-22, and Arg-26 each coordinate 3-phosphoshikimate. Lys-21 is a binding site for phosphoenolpyruvate. The phosphoenolpyruvate site is built by Gly-91 and Arg-119. Positions 164, 166, 313, and 340 each coordinate 3-phosphoshikimate. Gln-166 contacts phosphoenolpyruvate. The active-site Proton acceptor is Asp-313. 2 residues coordinate phosphoenolpyruvate: Arg-344 and Arg-386.

Belongs to the EPSP synthase family. In terms of assembly, monomer.

The protein resides in the cytoplasm. It carries out the reaction 3-phosphoshikimate + phosphoenolpyruvate = 5-O-(1-carboxyvinyl)-3-phosphoshikimate + phosphate. The protein operates within metabolic intermediate biosynthesis; chorismate biosynthesis; chorismate from D-erythrose 4-phosphate and phosphoenolpyruvate: step 6/7. Catalyzes the transfer of the enolpyruvyl moiety of phosphoenolpyruvate (PEP) to the 5-hydroxyl of shikimate-3-phosphate (S3P) to produce enolpyruvyl shikimate-3-phosphate and inorganic phosphate. In Campylobacter jejuni subsp. jejuni serotype O:23/36 (strain 81-176), this protein is 3-phosphoshikimate 1-carboxyvinyltransferase.